A 426-amino-acid polypeptide reads, in one-letter code: MKQLRLEPVVQVRGEINIPGSKSISNRALLLATLAQGTTTLTNLLDSDDIRHMLASLKQLGVEYRLSHNNTVCELAGLGGVMSSKQAQTLFLGNAGTAMRPLCAALTLGQGEFTLTGEPRMEERPIGDLVDALRQLGANIVYLKNDGFPPLTINATGLNGGDVEIVGDLSSQFLTALLMVAPLAKGSVNIHVKGELVSKPYIDITLALMAQFGVKVINHHYARFEIPAGQHYVSPGKVLVEGDASSASYFLAAGAIKGGEVKVTGVGRLSIQGDVKFADVLEKMGADIEWGDDYIIARGAPLTAVDLDMNHIPDAAMTIATAALFAKGTTVIRNIYNWRIKETDRLAAMATELRKVGAEVEEGNDYIKITPPAVLNTAQIDTYNDHRMAMCFSMLAFADCGITINDPDCTSKTFPDYFVQFASLKV.

The 3-phosphoshikimate site is built by Lys22, Ser23, and Arg27. Lys22 provides a ligand contact to phosphoenolpyruvate. Residues Gly96 and Arg124 each coordinate phosphoenolpyruvate. The 3-phosphoshikimate site is built by Ser170, Ser171, Gln172, Ser198, Asp314, Asn337, and Lys341. Phosphoenolpyruvate is bound at residue Gln172. The Proton acceptor role is filled by Asp314. Arg345, Arg387, and Lys412 together coordinate phosphoenolpyruvate.

Belongs to the EPSP synthase family. Monomer.

It localises to the cytoplasm. It carries out the reaction 3-phosphoshikimate + phosphoenolpyruvate = 5-O-(1-carboxyvinyl)-3-phosphoshikimate + phosphate. The protein operates within metabolic intermediate biosynthesis; chorismate biosynthesis; chorismate from D-erythrose 4-phosphate and phosphoenolpyruvate: step 6/7. Functionally, catalyzes the transfer of the enolpyruvyl moiety of phosphoenolpyruvate (PEP) to the 5-hydroxyl of shikimate-3-phosphate (S3P) to produce enolpyruvyl shikimate-3-phosphate and inorganic phosphate. The protein is 3-phosphoshikimate 1-carboxyvinyltransferase of Shewanella oneidensis (strain ATCC 700550 / JCM 31522 / CIP 106686 / LMG 19005 / NCIMB 14063 / MR-1).